Reading from the N-terminus, the 383-residue chain is Cytochrome b (383 aa).

The next 4 membrane-spanning stretches (helical) occupy residues 34-54 (FGSL…FLMM), 78-99 (WLIR…FLHI), 114-134 (WNVG…GYVL), and 179-199 (FTAL…THLI). Residues His84 and His98 each contribute to the heme b site. Residues His183 and His197 each contribute to the heme b site. Residue His202 participates in a ubiquinone binding. The next 4 membrane-spanning stretches (helical) occupy residues 227-247 (MKDV…ALYL), 289-309 (LGGV…PFLH), 321-341 (LSQL…WIGG), and 348-368 (YILL…ILMP).

The protein belongs to the cytochrome b family. The cytochrome bc1 complex contains 3 respiratory subunits (MT-CYB, CYC1 and UQCRFS1), 2 core proteins (UQCRC1 and UQCRC2) and probably 6 low-molecular weight proteins. Requires heme b as cofactor.

It localises to the mitochondrion inner membrane. Its function is as follows. Component of the ubiquinol-cytochrome c reductase complex (complex III or cytochrome b-c1 complex) that is part of the mitochondrial respiratory chain. The b-c1 complex mediates electron transfer from ubiquinol to cytochrome c. Contributes to the generation of a proton gradient across the mitochondrial membrane that is then used for ATP synthesis. The polypeptide is Cytochrome b (MT-CYB) (Caiman crocodilus (Spectacled caiman)).